The chain runs to 183 residues: Ribosome rescue factor SmrB (183 aa).

The Smr domain maps to 98 to 173 (LDLHGLTQQQ…GDAALLVLIE (76 aa)).

Belongs to the SmrB family. As to quaternary structure, associates with collided ribosomes, but not with correctly translating polysomes.

Functionally, acts as a ribosome collision sensor. Detects stalled/collided disomes (pairs of ribosomes where the leading ribosome is stalled and a second ribosome has collided with it) and endonucleolytically cleaves mRNA at the 5' boundary of the stalled ribosome. Stalled/collided disomes form a new interface (primarily via the 30S subunits) that binds SmrB. Cleaved mRNA becomes available for tmRNA ligation, leading to ribosomal subunit dissociation and rescue of stalled ribosomes. The polypeptide is Ribosome rescue factor SmrB (Klebsiella pneumoniae (strain 342)).